The chain runs to 479 residues: Membrane-bound lytic murein transglycosylase F (479 aa).

The signal sequence occupies residues methionine 1–alanine 15. Residues glycine 16 to valine 258 are non-LT domain. Residues arginine 260–proline 479 are LT domain. The active site involves glutamate 303. Positions leucine 457–proline 479 are disordered. A compositionally biased stretch (basic and acidic residues) spans glutamate 461–glutamine 470.

The protein in the N-terminal section; belongs to the bacterial solute-binding protein 3 family. This sequence in the C-terminal section; belongs to the transglycosylase Slt family.

The protein resides in the cell outer membrane. It carries out the reaction Exolytic cleavage of the (1-&gt;4)-beta-glycosidic linkage between N-acetylmuramic acid (MurNAc) and N-acetylglucosamine (GlcNAc) residues in peptidoglycan, from either the reducing or the non-reducing ends of the peptidoglycan chains, with concomitant formation of a 1,6-anhydrobond in the MurNAc residue.. Its function is as follows. Murein-degrading enzyme that degrades murein glycan strands and insoluble, high-molecular weight murein sacculi, with the concomitant formation of a 1,6-anhydromuramoyl product. Lytic transglycosylases (LTs) play an integral role in the metabolism of the peptidoglycan (PG) sacculus. Their lytic action creates space within the PG sacculus to allow for its expansion as well as for the insertion of various structures such as secretion systems and flagella. The chain is Membrane-bound lytic murein transglycosylase F from Shewanella pealeana (strain ATCC 700345 / ANG-SQ1).